Consider the following 78-residue polypeptide: Large ribosomal subunit protein bL31 (78 aa).

This sequence belongs to the bacterial ribosomal protein bL31 family. Type A subfamily. In terms of assembly, part of the 50S ribosomal subunit.

In terms of biological role, binds the 23S rRNA. The protein is Large ribosomal subunit protein bL31 (rpmE) of Rickettsia typhi (strain ATCC VR-144 / Wilmington).